The chain runs to 54 residues: Insulin (54 aa).

3 disulfides stabilise this stretch: Cys7-Cys39, Cys19-Cys52, and Cys38-Cys43.

The protein belongs to the insulin family. In terms of assembly, heterodimer of a B chain and an A chain linked by two disulfide bonds.

It localises to the secreted. Insulin decreases blood glucose concentration. It increases cell permeability to monosaccharides, amino acids and fatty acids. It accelerates glycolysis, the pentose phosphate cycle, and glycogen synthesis in liver. This Squalus acanthias (Spiny dogfish) protein is Insulin (ins).